The primary structure comprises 352 residues: uncharacterized protein (352 aa).

To Synechocystis PCC 6803 slr0039.

This is an uncharacterized protein from Archaeoglobus fulgidus (strain ATCC 49558 / DSM 4304 / JCM 9628 / NBRC 100126 / VC-16).